The following is a 521-amino-acid chain: GMP synthase [glutamine-hydrolyzing] (521 aa).

Positions 8–203 constitute a Glutamine amidotransferase type-1 domain; the sequence is KILILDFGAQ…VVDVCGCQTL (196 aa). Cys85 functions as the Nucleophile in the catalytic mechanism. Active-site residues include His177 and Glu179. In terms of domain architecture, GMPS ATP-PPase spans 204 to 396; the sequence is WTAANIIDDQ…LGLPRTMVYR (193 aa). 231–237 lines the ATP pocket; it reads SGGVDSS.

As to quaternary structure, homodimer.

It carries out the reaction XMP + L-glutamine + ATP + H2O = GMP + L-glutamate + AMP + diphosphate + 2 H(+). The protein operates within purine metabolism; GMP biosynthesis; GMP from XMP (L-Gln route): step 1/1. Catalyzes the synthesis of GMP from XMP. This chain is GMP synthase [glutamine-hydrolyzing], found in Stenotrophomonas maltophilia (strain R551-3).